The primary structure comprises 513 residues: ATP synthase subunit alpha (513 aa).

169–176 provides a ligand contact to ATP; the sequence is GDRQCGKT.

The protein belongs to the ATPase alpha/beta chains family. F-type ATPases have 2 components, CF(1) - the catalytic core - and CF(0) - the membrane proton channel. CF(1) has five subunits: alpha(3), beta(3), gamma(1), delta(1), epsilon(1). CF(0) has three main subunits: a(1), b(2) and c(9-12). The alpha and beta chains form an alternating ring which encloses part of the gamma chain. CF(1) is attached to CF(0) by a central stalk formed by the gamma and epsilon chains, while a peripheral stalk is formed by the delta and b chains.

It localises to the cell inner membrane. It carries out the reaction ATP + H2O + 4 H(+)(in) = ADP + phosphate + 5 H(+)(out). Its function is as follows. Produces ATP from ADP in the presence of a proton gradient across the membrane. The alpha chain is a regulatory subunit. The polypeptide is ATP synthase subunit alpha (Burkholderia cenocepacia (strain ATCC BAA-245 / DSM 16553 / LMG 16656 / NCTC 13227 / J2315 / CF5610) (Burkholderia cepacia (strain J2315))).